The sequence spans 212 residues: Ribonuclease HII (212 aa).

The RNase H type-2 domain maps to glycine 22–threonine 211. A divalent metal cation contacts are provided by aspartate 28, glutamate 29, and aspartate 120.

Belongs to the RNase HII family. The cofactor is Mn(2+). Mg(2+) is required as a cofactor.

It is found in the cytoplasm. It carries out the reaction Endonucleolytic cleavage to 5'-phosphomonoester.. In terms of biological role, endonuclease that specifically degrades the RNA of RNA-DNA hybrids. This Shewanella frigidimarina (strain NCIMB 400) protein is Ribonuclease HII.